A 319-amino-acid polypeptide reads, in one-letter code: Urease accessory protein UreD (319 aa).

Residues 254 to 273 (PDPVGSPAARRESVPAKRAE) are disordered. Over residues 262–273 (ARRESVPAKRAE) the composition is skewed to basic and acidic residues.

This sequence belongs to the UreD family. UreD, UreF and UreG form a complex that acts as a GTP-hydrolysis-dependent molecular chaperone, activating the urease apoprotein by helping to assemble the nickel containing metallocenter of UreC. The UreE protein probably delivers the nickel.

Its subcellular location is the cytoplasm. Its function is as follows. Required for maturation of urease via the functional incorporation of the urease nickel metallocenter. In Frankia casuarinae (strain DSM 45818 / CECT 9043 / HFP020203 / CcI3), this protein is Urease accessory protein UreD.